A 413-amino-acid chain; its full sequence is Peptidase T (413 aa).

Residue histidine 82 participates in Zn(2+) binding. The active site involves aspartate 84. Zn(2+) is bound at residue aspartate 144. Glutamate 178 (proton acceptor) is an active-site residue. Zn(2+) is bound by residues glutamate 179, aspartate 201, and histidine 383.

This sequence belongs to the peptidase M20B family. As to quaternary structure, homotrimer. It depends on Zn(2+) as a cofactor.

It localises to the cytoplasm. It catalyses the reaction Release of the N-terminal residue from a tripeptide.. Its activity is regulated as follows. Totally inhibited by EDTA, EGTA, and 1,10-phenanthroline. Strongly inhibited by divalent cations such as Cu(2+), Cd(2+), Co(2+) and Mn(2+). Partially inhibited by the reducing agents 2-mercaptoethanol and dithiothreitol. Its function is as follows. Cleaves the N-terminal amino acid of tripeptides. Shows broad substrate specificity, exhibiting maximum activity against hydrophobic tripeptides, with the highest activity for Met-Gly-Gly. Therefore this enzyme may play an important role in flavor formation during cheese ripening. Is also able to slowly hydrolyze some hydrophobic dipeptides, but displays no activity against tetrapeptides and the tripeptide Phe-Gly-Gly. This Lactobacillus helveticus (Lactobacillus suntoryeus) protein is Peptidase T (pepT).